A 131-amino-acid polypeptide reads, in one-letter code: Small ribosomal subunit protein uS8 (131 aa).

The protein belongs to the universal ribosomal protein uS8 family. Part of the 30S ribosomal subunit. Contacts proteins S5 and S12.

One of the primary rRNA binding proteins, it binds directly to 16S rRNA central domain where it helps coordinate assembly of the platform of the 30S subunit. The sequence is that of Small ribosomal subunit protein uS8 from Bacteroides fragilis (strain ATCC 25285 / DSM 2151 / CCUG 4856 / JCM 11019 / LMG 10263 / NCTC 9343 / Onslow / VPI 2553 / EN-2).